A 330-amino-acid chain; its full sequence is Exostosin-like 2 (330 aa).

Residues 1–22 (MRCCHICKLPGRVMGIRVLRLS) lie on the Cytoplasmic side of the membrane. A helical; Signal-anchor for type II membrane protein transmembrane segment spans residues 23 to 43 (LVVILVLLLVAGALTALLPSV). The Lumenal segment spans residues 44 to 330 (KEDKMLMLRR…FPYANYKRKI (287 aa)). Gln71 serves as a coordination point for UDP-N-acetyl-alpha-D-galactosamine. Residue Gln71 participates in UDP-N-acetyl-alpha-D-glucosamine binding. Asn74 carries an N-linked (GlcNAc...) asparagine glycan. The UDP-N-acetyl-alpha-D-galactosamine site is built by Arg75, Asn100, Asn129, Arg134, Asp150, Asp151, Asp152, and Asp244. Residues Arg75, Asn100, Asn129, Arg134, Asp150, Asp151, Asp152, Asp244, Asp245, and Arg293 each contribute to the UDP-N-acetyl-alpha-D-glucosamine site. A Mn(2+)-binding site is contributed by Asp152. Residues Cys243 and Cys296 are joined by a disulfide bond. Asp245 is a catalytic residue. Arg293 lines the UDP-N-acetyl-alpha-D-galactosamine pocket.

The protein belongs to the glycosyltransferase 47 family. Mn(2+) is required as a cofactor. The soluble form derives from the membrane form by proteolytic processing. In terms of tissue distribution, ubiquitous.

Its subcellular location is the endoplasmic reticulum membrane. The protein localises to the secreted. It catalyses the reaction 3-O-(beta-D-GlcA-(1-&gt;3)-beta-D-Gal-(1-&gt;3)-beta-D-Gal-(1-&gt;4)-beta-D-Xyl)-L-seryl-[protein] + UDP-N-acetyl-alpha-D-glucosamine = 3-O-(alpha-D-GlcNAc-(1-&gt;4)-beta-D-GlcA-(1-&gt;3)-beta-D-Gal-(1-&gt;3)-beta-D-Gal-(1-&gt;4)-beta-D-Xyl)-L-seryl-[protein] + UDP + H(+). The protein operates within glycan metabolism; heparan sulfate biosynthesis. Its function is as follows. Glycosyltransferase required for the biosynthesis of heparan-sulfate and responsible for the alternating addition of beta-1-4-linked glucuronic acid (GlcA) and alpha-1-4-linked N-acetylglucosamine (GlcNAc) units to nascent heparan sulfate chains. The polypeptide is Exostosin-like 2 (EXTL2) (Homo sapiens (Human)).